The chain runs to 497 residues: Cytochrome P450 71A20 (497 aa).

Residues Met-3–Lys-23 traverse the membrane as a helical segment. Cys-440 provides a ligand contact to heme.

Belongs to the cytochrome P450 family. The cofactor is heme.

It localises to the membrane. This is Cytochrome P450 71A20 (CYP71A20) from Arabidopsis thaliana (Mouse-ear cress).